We begin with the raw amino-acid sequence, 385 residues long: MEVKVKKRVVVGLSGGVDSSVSALLLKQEGYEVIGLFMSNWDTIANFENNHEFNKTHQGCESELDYQDAQAVAQKIGIPLYRVEFIKEYWDNVFEYFLSEYQKNRTPNPDILCNQFIKFDSFLNYAKNELQADYIAMGHYARVKHDRNSSFLLKAIDTNKDQTYFLCNLNQNQLQNVLFPIGHLTKLQVRAIAKKHGLITANKKDSTGICFIGERNFKTFLQNYIPNQPGQIINIVNNQIIGHHIGTMYYTIGQRKGLNLGGMNERMFVCDKDIDKKIIYVAPSSFEKQYLISTQALIENINFIEPYNPQIPIMVRFRHRQDLIIVNDFLPIKNTKNVLINYESARAITPGQYAVFYQNDHCIGGGIVSKTNIGHQKVDFLVYKS.

ATP-binding positions include 12 to 19 and methionine 38; that span reads GLSGGVDS. An interaction with target base in tRNA region spans residues 108-110; sequence NPD. Residue cysteine 113 is the Nucleophile of the active site. A disulfide bridge links cysteine 113 with cysteine 210. Residue glycine 138 participates in ATP binding. Residues 160–162 form an interaction with tRNA region; sequence KDQ. The Cysteine persulfide intermediate role is filled by cysteine 210.

This sequence belongs to the MnmA/TRMU family.

The protein localises to the cytoplasm. It carries out the reaction S-sulfanyl-L-cysteinyl-[protein] + uridine(34) in tRNA + AH2 + ATP = 2-thiouridine(34) in tRNA + L-cysteinyl-[protein] + A + AMP + diphosphate + H(+). Catalyzes the 2-thiolation of uridine at the wobble position (U34) of tRNA, leading to the formation of s(2)U34. The polypeptide is tRNA-specific 2-thiouridylase MnmA (Ureaplasma parvum serovar 3 (strain ATCC 27815 / 27 / NCTC 11736)).